A 578-amino-acid polypeptide reads, in one-letter code: Raftlin (578 aa).

Gly-2 is lipidated: N-myristoyl glycine. A lipid anchor (S-palmitoyl cysteine) is attached at Cys-3. The segment covering 169–184 has biased composition (polar residues); it reads VNSAGSSAPVSTANST. 3 disordered regions span residues 169 to 271, 449 to 525, and 551 to 578; these read VNSA…VHEE, FSRE…PGGL, and CTGH…VEEN. A phosphoserine mark is found at Ser-183, Ser-199, and Ser-220. The segment covering 185–206 has biased composition (basic and acidic residues); that stretch reads EDARDAKNARGDHASLENEKPG. Residues 457–466 are compositionally biased toward basic residues; the sequence is RQMRKSKGKL. Basic and acidic residues predominate over residues 467-485; it reads SARDKQQAEENEKNLEDQS. Residue Ser-505 is modified to Phosphoserine. 2 stretches are compositionally biased toward basic and acidic residues: residues 506–518 and 557–578; these read EEMK…DKGE and PGED…VEEN.

This sequence belongs to the raftlin family. As to quaternary structure, interacts with TLR4; the interaction occurs in response to lipopolysaccharide stimulation. Interacts with CLTC; the interaction occurs in response to pathogens. Interacts with AP2A1 and AP2B1. As to expression, expressed in B-cells (at protein level). Expressed in dendritic cells and macrophages.

Its subcellular location is the cell membrane. The protein localises to the cytoplasm. It is found in the membrane raft. The protein resides in the endosome. It localises to the early endosome. Functionally, involved in protein trafficking via association with clathrin and AP2 complex. Upon bacterial lipopolysaccharide stimulation, mediates internalization of TLR4 to endosomes in dendritic cells and macrophages; and internalization of poly(I:C) to TLR3-positive endosomes in myeloid dendritic cells and epithelial cells; resulting in activation of TICAM1-mediated signaling and subsequent IFNB1 production. Involved in T-cell antigen receptor-mediated signaling by regulating tyrosine kinase LCK localization, T-cell dependent antibody production and cytokine secretion. May regulate B-cell antigen receptor-mediated signaling. May play a pivotal role in the formation and/or maintenance of lipid rafts. The protein is Raftlin (RFTN1) of Homo sapiens (Human).